Reading from the N-terminus, the 172-residue chain is Stellate protein CG33243 (172 aa).

This sequence belongs to the casein kinase 2 subunit beta family. In terms of assembly, interacts in vitro with the casein kinase 2 alpha subunit (CkII-alpha). The relevance of such interaction is however unclear in vivo. Probably not expressed in wild-type flies. In males lacking the Y chromosome, it is testis-specific and constitutes the main component of star-shaped crystals.

In terms of biological role, unknown. In males lacking the Y chromosome, its strong overexpression leads to the appearance of proteinaceous star-shaped crystals in the primary spermatocytes causing meiotic drive, possibly by interfering with normal casein kinase 2 activity. The sequence is that of Stellate protein CG33243 (Ste:CG33243) from Drosophila melanogaster (Fruit fly).